The sequence spans 515 residues: Carboxyl-terminal-processing peptidase 2, chloroplastic (515 aa).

In terms of domain architecture, PDZ spans 198–286; the sequence is FKSLRSGTQG…SAVELAIRSG (89 aa). Active-site charge relay system residues include Ser-417 and Lys-442.

The protein belongs to the peptidase S41A family.

It is found in the plastid. The protein localises to the chloroplast thylakoid lumen. It catalyses the reaction The enzyme shows specific recognition of a C-terminal tripeptide, Xaa-Yaa-Zaa, in which Xaa is preferably Ala or Leu, Yaa is preferably Ala or Tyr, and Zaa is preferably Ala, but then cleaves at a variable distance from the C-terminus. A typical cleavage is -Ala-Ala-|-Arg-Ala-Ala-Lys-Glu-Asn-Tyr-Ala-Leu-Ala-Ala.. Its function is as follows. Protease involved in the C-terminal processing of the chloroplastic D1 protein of photosystem II. This proteolytic processing is necessary to allow the light-driven assembly of the tetranuclear manganese cluster, which is responsible for photosynthetic water oxidation. The chain is Carboxyl-terminal-processing peptidase 2, chloroplastic (CTPA2) from Arabidopsis thaliana (Mouse-ear cress).